The following is a 211-amino-acid chain: Dual specificity protein phosphatase 26 (211 aa).

In terms of domain architecture, Tyrosine-protein phosphatase spans 60-207 (NHADEVWPGL…LLALDRRLRQ (148 aa)). Cysteine 152 acts as the Phosphocysteine intermediate in catalysis.

It belongs to the protein-tyrosine phosphatase family. Non-receptor class dual specificity subfamily. As to quaternary structure, interacts with HSF4.

The protein resides in the cytoplasm. It localises to the nucleus. Its subcellular location is the golgi apparatus. It carries out the reaction O-phospho-L-tyrosyl-[protein] + H2O = L-tyrosyl-[protein] + phosphate. The catalysed reaction is O-phospho-L-seryl-[protein] + H2O = L-seryl-[protein] + phosphate. The enzyme catalyses O-phospho-L-threonyl-[protein] + H2O = L-threonyl-[protein] + phosphate. Its function is as follows. Inactivates MAPK1 and MAPK3 which leads to dephosphorylation of heat shock factor protein 4 and a reduction in its DNA-binding activity. This is Dual specificity protein phosphatase 26 (DUSP26) from Pongo abelii (Sumatran orangutan).